Consider the following 538-residue polypeptide: Phosphoenolpyruvate carboxykinase (ATP) (538 aa).

Residues Arg-64, Tyr-205, and Lys-211 each contribute to the substrate site. ATP is bound by residues Lys-211, His-230, and 246–254 (GLSGTGKTT). The Mn(2+) site is built by Lys-211 and His-230. Mn(2+) is bound at residue Asp-267. Residues Glu-295, Arg-331, 447–448 (RI), and Thr-453 each bind ATP. Residue Arg-331 coordinates substrate.

It belongs to the phosphoenolpyruvate carboxykinase (ATP) family. Monomer. It depends on Mn(2+) as a cofactor.

The protein resides in the cytoplasm. It carries out the reaction oxaloacetate + ATP = phosphoenolpyruvate + ADP + CO2. The protein operates within carbohydrate biosynthesis; gluconeogenesis. In terms of biological role, involved in the gluconeogenesis. Catalyzes the conversion of oxaloacetate (OAA) to phosphoenolpyruvate (PEP) through direct phosphoryl transfer between the nucleoside triphosphate and OAA. This is Phosphoenolpyruvate carboxykinase (ATP) from Pasteurella multocida (strain Pm70).